The following is a 278-amino-acid chain: Phosphoenolpyruvate carboxylase kinase 2 (278 aa).

Positions 11–269 (YQLCDEIGRG…AEDALRHSWM (259 aa)) constitute a Protein kinase domain. Residues 17-25 (IGRGRFGTI) and K40 contribute to the ATP site. The Proton acceptor role is filled by D137.

This sequence belongs to the protein kinase superfamily. Ser/Thr protein kinase family. In terms of tissue distribution, expressed in flowers and roots, and at lower levels in cauline leaves. Barely detectable in rosette leaves and stems.

The catalysed reaction is L-seryl-[protein] + ATP = O-phospho-L-seryl-[protein] + ADP + H(+). It catalyses the reaction L-threonyl-[protein] + ATP = O-phospho-L-threonyl-[protein] + ADP + H(+). Calcium-independent kinase involved in light-dependent phosphoenolpyruvate carboxylase phosphorylation. This is Phosphoenolpyruvate carboxylase kinase 2 (PPCK2) from Arabidopsis thaliana (Mouse-ear cress).